Consider the following 411-residue polypeptide: Argininosuccinate lyase (411 aa).

It belongs to the lyase 1 family. Argininosuccinate lyase subfamily.

The protein localises to the cytoplasm. It catalyses the reaction 2-(N(omega)-L-arginino)succinate = fumarate + L-arginine. Its pathway is amino-acid biosynthesis; L-arginine biosynthesis; L-arginine from L-ornithine and carbamoyl phosphate: step 3/3. This chain is Argininosuccinate lyase, found in Legionella pneumophila (strain Paris).